The primary structure comprises 620 residues: Chaperone protein HscA homolog (620 aa).

This sequence belongs to the heat shock protein 70 family.

Chaperone involved in the maturation of iron-sulfur cluster-containing proteins. Has a low intrinsic ATPase activity which is markedly stimulated by HscB. This chain is Chaperone protein HscA homolog, found in Shewanella woodyi (strain ATCC 51908 / MS32).